The following is a 331-amino-acid chain: Ketol-acid reductoisomerase (NADP(+)) (331 aa).

One can recognise a KARI N-terminal Rossmann domain in the interval 2–182 (ARMYYDADAN…GGTRGGILET (181 aa)). Residues 25–28 (YGSQ), Ser51, Ser53, and 83–86 (DDVQ) contribute to the NADP(+) site. His108 is a catalytic residue. NADP(+) is bound at residue Gly134. Residues 183 to 328 (TFREETETDL…KDLRAMFSWL (146 aa)) form the KARI C-terminal knotted domain. Mg(2+) is bound by residues Asp191, Glu195, Glu227, and Glu231. Residue Ser252 coordinates substrate.

This sequence belongs to the ketol-acid reductoisomerase family. Requires Mg(2+) as cofactor.

The enzyme catalyses (2R)-2,3-dihydroxy-3-methylbutanoate + NADP(+) = (2S)-2-acetolactate + NADPH + H(+). It carries out the reaction (2R,3R)-2,3-dihydroxy-3-methylpentanoate + NADP(+) = (S)-2-ethyl-2-hydroxy-3-oxobutanoate + NADPH + H(+). The protein operates within amino-acid biosynthesis; L-isoleucine biosynthesis; L-isoleucine from 2-oxobutanoate: step 2/4. It functions in the pathway amino-acid biosynthesis; L-valine biosynthesis; L-valine from pyruvate: step 2/4. Its function is as follows. Involved in the biosynthesis of branched-chain amino acids (BCAA). Catalyzes an alkyl-migration followed by a ketol-acid reduction of (S)-2-acetolactate (S2AL) to yield (R)-2,3-dihydroxy-isovalerate. In the isomerase reaction, S2AL is rearranged via a Mg-dependent methyl migration to produce 3-hydroxy-3-methyl-2-ketobutyrate (HMKB). In the reductase reaction, this 2-ketoacid undergoes a metal-dependent reduction by NADPH to yield (R)-2,3-dihydroxy-isovalerate. The polypeptide is Ketol-acid reductoisomerase (NADP(+)) (Picosynechococcus sp. (strain ATCC 27264 / PCC 7002 / PR-6) (Agmenellum quadruplicatum)).